The sequence spans 791 residues: Splicing factor 3A subunit 1 (791 aa).

Residues methionine 1–glycine 41 are disordered. Lysine 20 is covalently cross-linked (Glycyl lysine isopeptide (Lys-Gly) (interchain with G-Cter in SUMO2)). Residues glutamine 21 to threonine 34 show a composition bias toward basic and acidic residues. One copy of the SURP motif 1 repeat lies at isoleucine 52–tyrosine 94. Residue lysine 55 is modified to N6-acetyllysine. Residue lysine 131 forms a Glycyl lysine isopeptide (Lys-Gly) (interchain with G-Cter in SUMO2) linkage. An SURP motif 2 repeat occupies valine 166–phenylalanine 208. A disordered region spans residues glycine 318 to serine 411. Residues serine 320 and serine 329 each carry the phosphoserine modification. Residues serine 320–lysine 336 show a composition bias toward acidic residues. Residues threonine 340–glutamine 351 are compositionally biased toward polar residues. Acidic residues predominate over residues aspartate 352–glutamate 362. Position 357 is a phosphoserine (serine 357). Residues valine 366–proline 382 show a composition bias toward pro residues. Over residues isoleucine 386–alanine 395 the composition is skewed to basic and acidic residues. Serine 411 carries the phosphoserine modification. Residue lysine 422 forms a Glycyl lysine isopeptide (Lys-Gly) (interchain with G-Cter in SUMO2) linkage. Serine 449 is subject to Phosphoserine. Position 454 is a phosphotyrosine (tyrosine 454). Positions isoleucine 486–tryptophan 500 are enriched in basic and acidic residues. Disordered stretches follow at residues isoleucine 486–alanine 516, histidine 528–proline 582, and proline 664–lysine 684. Lysine 497 is covalently cross-linked (Glycyl lysine isopeptide (Lys-Gly) (interchain with G-Cter in SUMO2)). The residue at position 506 (serine 506) is a Phosphoserine. Over residues methionine 507–alanine 516 the composition is skewed to polar residues. Lysine 540 is covalently cross-linked (Glycyl lysine isopeptide (Lys-Gly) (interchain with G-Cter in SUMO2)). A compositionally biased stretch (polar residues) spans alanine 561–proline 570. Residues proline 664–proline 673 show a composition bias toward pro residues. The required and sufficient for nuclear import stretch occupies residues proline 678 to lysine 700. A Glycyl lysine isopeptide (Lys-Gly) (interchain with G-Cter in SUMO2) cross-link involves residue lysine 684. The Ubiquitin-like domain maps to isoleucine 705–glycine 788. Phosphotyrosine is present on tyrosine 757.

In terms of assembly, component of the 17S U2 SnRNP complex, a ribonucleoprotein complex that contains small nuclear RNA (snRNA) U2 and a number of specific proteins. Part of the SF3A subcomplex of the 17S U2 SnRNP complex which is composed of three subunits; SF3A3/SAP61, SF3A2/SAP62 and SF3A1/SAP114. SF3A associates with the splicing factor SF3B and a 12S RNA unit to form the mature 17S U2 small nuclear ribonucleoprotein complex (17S U2 snRNP). SF3A1 functions as a scaffold that interacts directly with both SF3A2 and SF3A3. Identified in the spliceosome 'E' complex, a precursor of the spliceosome 'A' complex. Identified in the spliceosome 'A' and 'B' complexes. Identified in the spliceosome 'C' complex. Interacts with P2RX6; resulting in a reduction of the splicing activity.

Its subcellular location is the nucleus. The protein resides in the nucleus speckle. Functionally, component of the 17S U2 SnRNP complex of the spliceosome, a large ribonucleoprotein complex that removes introns from transcribed pre-mRNAs. The 17S U2 SnRNP complex (1) directly participates in early spliceosome assembly and (2) mediates recognition of the intron branch site during pre-mRNA splicing by promoting the selection of the pre-mRNA branch-site adenosine, the nucleophile for the first step of splicing. Within the 17S U2 SnRNP complex, SF3A1 is part of the SF3A subcomplex that contributes to the assembly of the 17S U2 snRNP, and the subsequent assembly of the pre-spliceosome 'E' complex and the pre-catalytic spliceosome 'A' complex. Involved in pre-mRNA splicing as a component of pre-catalytic spliceosome 'B' complexes. The chain is Splicing factor 3A subunit 1 (Sf3a1) from Mus musculus (Mouse).